The following is a 300-amino-acid chain: L-threonine kinase (300 aa).

Position 92 to 102 (Pro-92 to Ala-102) interacts with ATP.

Belongs to the GHMP kinase family. PduX subfamily.

It localises to the cytoplasm. The catalysed reaction is L-threonine + ATP = O-phospho-L-threonine + ADP + H(+). Its pathway is cofactor biosynthesis; adenosylcobalamin biosynthesis. The protein operates within polyol metabolism; 1,2-propanediol degradation. Functionally, L-threonine kinase that catalyzes the conversion of L-threonine to L-threonine-O-3-phosphate. Involved in the de novo synthesis of adenosylcobalamin (coenzyme B12) and the assimilation of cobyric acid. Uses ATP; the activity with CTP, GTP or UTP is 6, 11, and 3% of the activity with ATP, respectively. In terms of biological role, the 1,2-propanediol (1,2-PD)-specific bacterial microcompartment (BMC) concentrates low levels of 1,2-PD catabolic enzymes, concentrates volatile reaction intermediates thus enhancing pathway flux and keeps the level of toxic, mutagenic propionaldehyde low. This gene probably benefits from its induction via the Pdu promoter, rather than a physical interaction with the BMC. The sequence is that of L-threonine kinase from Salmonella typhimurium (strain LT2 / SGSC1412 / ATCC 700720).